Reading from the N-terminus, the 1544-residue chain is Lysine-specific demethylase 5B (1544 aa).

Residues 32–73 (CPVFEPSWEEFADPFAFIHKIRPIAEQTGICKVRPPPDWQPP) enclose the JmjN domain. The ARID domain maps to 97 to 187 (TRVKLNFLDQ…ILNPYNLFLS (91 aa)). Residues K148, K204, K209, K242, K274, and K278 each participate in a glycyl lysine isopeptide (Lys-Gly) (interchain with G-Cter in SUMO2) cross-link. The disordered stretch occupies residues 201-230 (TDTKDKEYKPHDIPQRQSVQPSETCPPARR). The span at 202–214 (DTKDKEYKPHDIP) shows a compositional bias: basic and acidic residues. The PHD-type 1 zinc finger occupies 309–359 (LYVCLLCGSGNDEDRLLLCDGCDDSYHTFCLIPPLHDVPKGDWRCPKCLAQ). Y425 lines the 2-oxoglutarate pocket. In terms of domain architecture, JmjC spans 453–619 (EYLDSGWNLN…LGRQCVEHYR (167 aa)). 2 residues coordinate Fe cation: H499 and E501. Residues S507, N509, and K517 each coordinate 2-oxoglutarate. Fe cation is bound at residue H587. The C5HC2 zinc-finger motif lies at 692 to 744 (CVKCKTTCFMSAISCSCKPGLLVCLHHVKELCSCPPYKYKLRYRYTLDDLYPM). K769 is covalently cross-linked (Glycyl lysine isopeptide (Lys-Gly) (interchain with G-Cter in SUMO2)). N6-acetyllysine is present on K832. Phosphoserine is present on S986. The segment at 1176–1224 (IKICLCQKAPAAPMIQCELCRDAFHTSCVAVPSISQGLRIWLCPHCRRS) adopts a PHD-type 2 zinc-finger fold. S1328 is modified (phosphoserine). Residues 1374–1400 (PSPAQQTDRSSPVRPSSEKNDCCRGKR) form a disordered region. Residues 1376–1387 (PAQQTDRSSPVR) are compositionally biased toward polar residues. The span at 1389 to 1400 (SSEKNDCCRGKR) shows a compositional bias: basic and acidic residues. K1450 is covalently cross-linked (Glycyl lysine isopeptide (Lys-Gly) (interchain with G-Cter in SUMO2)). A Phosphoserine modification is found at S1456. A PHD-type 3 zinc finger spans residues 1484-1538 (DAICPAVSCLQPEGDEVDWVQCDGSCNQWFHQVCVGVSPEMAEKEDYICVRCTVK).

The protein belongs to the JARID1 histone demethylase family. As to quaternary structure, interacts with FOXG1B, PAX9, MYC, MYCN and RB1. Interacts with HDAC1, HDAC4, HDAC5 and HDAC7. Interacts (via PHD-type 1 zinc finger) with histone H3 unmodified at 'Lys-4'; the interaction is inhibited when histone H3 is methylated at 'Arg-2' or 'Lys-4'. It depends on Fe(2+) as a cofactor. As to expression, ubiquitously expressed, with highest levels in testis. Down-regulated in melanoma and glioblastoma. Up-regulated in breast cancer (at protein level).

Its subcellular location is the nucleus. It catalyses the reaction N(6),N(6),N(6)-trimethyl-L-lysyl(4)-[histone H3] + 3 2-oxoglutarate + 3 O2 = L-lysyl(4)-[histone H3] + 3 formaldehyde + 3 succinate + 3 CO2. With respect to regulation, several specific inhibitors are being developed and tested. The inhibitor KDOAM-25 inhibits its demethylase activity, resulting to cell cycle arrest in myeloma cells. Functionally, histone demethylase that demethylates 'Lys-4' of histone H3, thereby playing a central role in histone code. Does not demethylate histone H3 'Lys-9' or H3 'Lys-27'. Demethylates trimethylated, dimethylated and monomethylated H3 'Lys-4'. Acts as a transcriptional corepressor for FOXG1B and PAX9. Favors the proliferation of breast cancer cells by repressing tumor suppressor genes such as BRCA1 and HOXA5. In contrast, may act as a tumor suppressor for melanoma. Represses the CLOCK-BMAL1 heterodimer-mediated transcriptional activation of the core clock component PER2. The sequence is that of Lysine-specific demethylase 5B (KDM5B) from Homo sapiens (Human).